Here is a 160-residue protein sequence, read N- to C-terminus: S-ribosylhomocysteine lyase (160 aa).

Residues H57, H61, and C127 each coordinate Fe cation.

Belongs to the LuxS family. As to quaternary structure, homodimer. Fe cation serves as cofactor.

It carries out the reaction S-(5-deoxy-D-ribos-5-yl)-L-homocysteine = (S)-4,5-dihydroxypentane-2,3-dione + L-homocysteine. Its function is as follows. Involved in the synthesis of autoinducer 2 (AI-2) which is secreted by bacteria and is used to communicate both the cell density and the metabolic potential of the environment. The regulation of gene expression in response to changes in cell density is called quorum sensing. Catalyzes the transformation of S-ribosylhomocysteine (RHC) to homocysteine (HC) and 4,5-dihydroxy-2,3-pentadione (DPD). The chain is S-ribosylhomocysteine lyase from Streptococcus gordonii (strain Challis / ATCC 35105 / BCRC 15272 / CH1 / DL1 / V288).